The primary structure comprises 38 residues: Large ribosomal subunit protein bL36 (38 aa).

This sequence belongs to the bacterial ribosomal protein bL36 family.

This Sorangium cellulosum (strain So ce56) (Polyangium cellulosum (strain So ce56)) protein is Large ribosomal subunit protein bL36.